A 118-amino-acid polypeptide reads, in one-letter code: Large ribosomal subunit protein uL24 (118 aa).

It belongs to the universal ribosomal protein uL24 family. In terms of assembly, part of the 50S ribosomal subunit.

Its function is as follows. One of two assembly initiator proteins, it binds directly to the 5'-end of the 23S rRNA, where it nucleates assembly of the 50S subunit. One of the proteins that surrounds the polypeptide exit tunnel on the outside of the subunit. In Prochlorococcus marinus (strain MIT 9215), this protein is Large ribosomal subunit protein uL24.